The chain runs to 336 residues: Probable deoxyhypusine synthase (336 aa).

The Nucleophile role is filled by lysine 308.

The protein belongs to the deoxyhypusine synthase family. Requires NAD(+) as cofactor.

It catalyses the reaction [eIF5A protein]-L-lysine + spermidine = [eIF5A protein]-deoxyhypusine + propane-1,3-diamine. It functions in the pathway protein modification; eIF5A hypusination. Its function is as follows. Catalyzes the NAD-dependent oxidative cleavage of spermidine and the subsequent transfer of the butylamine moiety of spermidine to the epsilon-amino group of a specific lysine residue of the eIF-5A precursor protein to form the intermediate deoxyhypusine residue. This Thermococcus gammatolerans (strain DSM 15229 / JCM 11827 / EJ3) protein is Probable deoxyhypusine synthase.